We begin with the raw amino-acid sequence, 169 residues long: UPF0303 protein Oant_1766 (169 aa).

This sequence belongs to the UPF0303 family.

In Brucella anthropi (strain ATCC 49188 / DSM 6882 / CCUG 24695 / JCM 21032 / LMG 3331 / NBRC 15819 / NCTC 12168 / Alc 37) (Ochrobactrum anthropi), this protein is UPF0303 protein Oant_1766.